Reading from the N-terminus, the 319-residue chain is Pantothenate kinase (319 aa).

Position 96–103 (96–103 (GSVAVGKS)) interacts with ATP.

The protein belongs to the prokaryotic pantothenate kinase family.

The protein localises to the cytoplasm. It carries out the reaction (R)-pantothenate + ATP = (R)-4'-phosphopantothenate + ADP + H(+). It functions in the pathway cofactor biosynthesis; coenzyme A biosynthesis; CoA from (R)-pantothenate: step 1/5. The chain is Pantothenate kinase (coaA) from Bacillus subtilis (strain 168).